Reading from the N-terminus, the 230-residue chain is Inactive L-threonine 3-dehydrogenase, mitochondrial (230 aa).

Belongs to the NAD(P)-dependent epimerase/dehydratase family. As to expression, expressed in all tissues examined. Detected in most cell types examined, but not observed in endothelial cells, glioma cell lines and some leukemia cell lines.

The protein localises to the mitochondrion. The polypeptide is Inactive L-threonine 3-dehydrogenase, mitochondrial (Homo sapiens (Human)).